A 65-amino-acid polypeptide reads, in one-letter code: Large ribosomal subunit protein bL35 (65 aa).

The protein belongs to the bacterial ribosomal protein bL35 family.

The polypeptide is Large ribosomal subunit protein bL35 (Erwinia tasmaniensis (strain DSM 17950 / CFBP 7177 / CIP 109463 / NCPPB 4357 / Et1/99)).